The chain runs to 822 residues: A disintegrin and metallopeptidase domain 3 (822 aa).

An N-terminal signal peptide occupies residues 1–16; the sequence is MLPLFLVLSYLGQVIA. In terms of domain architecture, Peptidase M12B spans 187–384; it reads RILRIKIIMD…PELDCLRNTS (198 aa). Disulfide bonds link cysteine 296–cysteine 379, cysteine 338–cysteine 363, cysteine 340–cysteine 345, cysteine 456–cysteine 476, cysteine 623–cysteine 635, cysteine 629–cysteine 641, and cysteine 643–cysteine 652. A Disintegrin domain is found at 395–484; that stretch reads GSYCGNHLLE…GCAPDTKAAD (90 aa). Positions 619-653 constitute an EGF-like domain; it reads GTRECEADDKCQGHGICNNLNNCQCESGFAPPECD. The helical transmembrane segment at 689–709 threads the bilayer; it reads VLLISFYILLPFLVVLAFMAV.

As to quaternary structure, interacts with LY6K. Interacts with TEX101. Initially synthesized as a 110-kDa precursor in round spermatids, and the precursor is then processed into a 42-kDa mature protein during the sperm transport into and/or once in the epididymis. In terms of tissue distribution, expressed in sperm (at protein level).

It localises to the cell membrane. Its function is as follows. Involved in fertilization by controlling sperm migration into the oviduct. Promotes the binding of sperm to the oocyte zona pellucida. This chain is A disintegrin and metallopeptidase domain 3, found in Mus musculus (Mouse).